Here is a 578-residue protein sequence, read N- to C-terminus: Aspartate--tRNA ligase (578 aa).

Glutamate 169 provides a ligand contact to L-aspartate. The tract at residues 191-194 (QTFK) is aspartate. Residue arginine 213 participates in L-aspartate binding. ATP is bound by residues 213–215 (RDE) and glutamine 222. Histidine 440 is an L-aspartate binding site. Glutamate 474 contacts ATP. Arginine 481 is an L-aspartate binding site. 526-529 (GLDR) is an ATP binding site.

The protein belongs to the class-II aminoacyl-tRNA synthetase family. Type 1 subfamily. Homodimer.

The protein localises to the cytoplasm. The catalysed reaction is tRNA(Asp) + L-aspartate + ATP = L-aspartyl-tRNA(Asp) + AMP + diphosphate. In terms of biological role, catalyzes the attachment of L-aspartate to tRNA(Asp) in a two-step reaction: L-aspartate is first activated by ATP to form Asp-AMP and then transferred to the acceptor end of tRNA(Asp). In Ureaplasma parvum serovar 3 (strain ATCC 700970), this protein is Aspartate--tRNA ligase.